The sequence spans 120 residues: Large ribosomal subunit protein uL24 (120 aa).

This sequence belongs to the universal ribosomal protein uL24 family. Part of the 50S ribosomal subunit.

Functionally, one of two assembly initiator proteins, it binds directly to the 5'-end of the 23S rRNA, where it nucleates assembly of the 50S subunit. In terms of biological role, one of the proteins that surrounds the polypeptide exit tunnel on the outside of the subunit. This Pseudarthrobacter chlorophenolicus (strain ATCC 700700 / DSM 12829 / CIP 107037 / JCM 12360 / KCTC 9906 / NCIMB 13794 / A6) (Arthrobacter chlorophenolicus) protein is Large ribosomal subunit protein uL24.